Here is a 149-residue protein sequence, read N- to C-terminus: uncharacterized protein (149 aa).

This is an uncharacterized protein from Caenorhabditis elegans.